The following is a 419-amino-acid chain: Histidine--tRNA ligase (419 aa).

It belongs to the class-II aminoacyl-tRNA synthetase family. Homodimer.

The protein localises to the cytoplasm. It carries out the reaction tRNA(His) + L-histidine + ATP = L-histidyl-tRNA(His) + AMP + diphosphate + H(+). This Synechococcus sp. (strain JA-3-3Ab) (Cyanobacteria bacterium Yellowstone A-Prime) protein is Histidine--tRNA ligase.